The primary structure comprises 84 residues: Small ribosomal subunit protein bS18B (84 aa).

This sequence belongs to the bacterial ribosomal protein bS18 family. As to quaternary structure, part of the 30S ribosomal subunit. Forms a tight heterodimer with protein bS6.

Functionally, binds as a heterodimer with protein bS6 to the central domain of the 16S rRNA, where it helps stabilize the platform of the 30S subunit. The polypeptide is Small ribosomal subunit protein bS18B (Mycolicibacterium smegmatis (strain ATCC 700084 / mc(2)155) (Mycobacterium smegmatis)).